An 81-amino-acid polypeptide reads, in one-letter code: Small ribosomal subunit protein uS15 (81 aa).

This sequence belongs to the universal ribosomal protein uS15 family. As to quaternary structure, part of the 30S ribosomal subunit. Forms a bridge to the 50S subunit in the 70S ribosome, contacting the 23S rRNA.

Functionally, one of the primary rRNA binding proteins, it binds directly to 16S rRNA where it helps nucleate assembly of the platform of the 30S subunit by binding and bridging several RNA helices of the 16S rRNA. In terms of biological role, forms an intersubunit bridge (bridge B4) with the 23S rRNA of the 50S subunit in the ribosome. The protein is Small ribosomal subunit protein uS15 of Mesomycoplasma hyorhinis (Mycoplasma hyorhinis).